Consider the following 462-residue polypeptide: Putative amidase AmiB2 (462 aa).

Residues lysine 81 and serine 155 each act as charge relay system in the active site. The Acyl-ester intermediate role is filled by serine 179.

Belongs to the amidase family.

It carries out the reaction a monocarboxylic acid amide + H2O = a monocarboxylate + NH4(+). The chain is Putative amidase AmiB2 (amiB2) from Mycobacterium bovis (strain ATCC BAA-935 / AF2122/97).